Here is a 414-residue protein sequence, read N- to C-terminus: Histidine--tRNA ligase (414 aa).

It belongs to the class-II aminoacyl-tRNA synthetase family. As to quaternary structure, homodimer.

It is found in the cytoplasm. It catalyses the reaction tRNA(His) + L-histidine + ATP = L-histidyl-tRNA(His) + AMP + diphosphate + H(+). The chain is Histidine--tRNA ligase from Anaeromyxobacter sp. (strain K).